The following is a 380-amino-acid chain: Guanine nucleotide-binding protein subunit beta (380 aa).

WD repeat units lie at residues 64–103, 106–145, 155–195, 203–243, 247–286, 296–335, and 342–380; these read GHSG…KTHA, LHCP…DRDG, GHKG…RISI, GHTA…RAVR, GHEG…QLQV, NELP…VVLN, and SHEG…RKIV.

Belongs to the WD repeat G protein beta family. G proteins are composed of 3 units, alpha, beta and gamma. Interacts with the gamma subunits RGG1 and RGG2.

It localises to the cell membrane. Guanine nucleotide-binding proteins (G proteins) are involved as modulators or transducers in various transmembrane signaling systems. The beta and gamma chains are required for the GTPase activity, for replacement of GDP by GTP, and for G protein-effector interaction. This Oryza sativa subsp. indica (Rice) protein is Guanine nucleotide-binding protein subunit beta.